The chain runs to 361 residues: Phospho-N-acetylmuramoyl-pentapeptide-transferase (361 aa).

The next 10 helical transmembrane spans lie at 27–47 (GALF…ISLL), 72–92 (TPTM…FLWA), 99–119 (VWIT…DDYL), 139–159 (ALIA…GLAY), 169–189 (AIVN…VGAG), 200–220 (GLAI…AYLV), 240–260 (LAVV…FNAP), 264–284 (IFMG…VAVA), 289–309 (IVLA…IIQV), and 338–358 (QVVI…LATL).

Belongs to the glycosyltransferase 4 family. MraY subfamily. Mg(2+) serves as cofactor.

Its subcellular location is the cell inner membrane. The catalysed reaction is UDP-N-acetyl-alpha-D-muramoyl-L-alanyl-gamma-D-glutamyl-meso-2,6-diaminopimeloyl-D-alanyl-D-alanine + di-trans,octa-cis-undecaprenyl phosphate = di-trans,octa-cis-undecaprenyl diphospho-N-acetyl-alpha-D-muramoyl-L-alanyl-D-glutamyl-meso-2,6-diaminopimeloyl-D-alanyl-D-alanine + UMP. It functions in the pathway cell wall biogenesis; peptidoglycan biosynthesis. In terms of biological role, catalyzes the initial step of the lipid cycle reactions in the biosynthesis of the cell wall peptidoglycan: transfers peptidoglycan precursor phospho-MurNAc-pentapeptide from UDP-MurNAc-pentapeptide onto the lipid carrier undecaprenyl phosphate, yielding undecaprenyl-pyrophosphoryl-MurNAc-pentapeptide, known as lipid I. This chain is Phospho-N-acetylmuramoyl-pentapeptide-transferase, found in Methylobacterium sp. (strain 4-46).